The primary structure comprises 452 residues: Probable V-type proton ATPase subunit H (452 aa).

This sequence belongs to the V-ATPase H subunit family. In terms of assembly, V-ATPase is a heteromultimeric enzyme composed of a peripheral catalytic V1 complex (components A to H) attached to an integral membrane V0 proton pore complex (components: a, c, c', c'' and d).

Subunit of the peripheral V1 complex of vacuolar ATPase. Subunit H activates the ATPase activity of the enzyme and couples ATPase activity to proton flow. Vacuolar ATPase is responsible for acidifying a variety of intracellular compartments in eukaryotic cells, thus providing most of the energy required for transport processes in the vacuolar system. In Oryza sativa subsp. japonica (Rice), this protein is Probable V-type proton ATPase subunit H.